A 316-amino-acid chain; its full sequence is Olfactory receptor 51J1 (316 aa).

The Extracellular segment spans residues 1-31 (MKISNNSLGFLPTTFILVGIPGLESEHLWIS). N5 is a glycosylation site (N-linked (GlcNAc...) asparagine). Residues 32 to 52 (VPFSLIYIIIFLGNGIILHVI) traverse the membrane as a helical segment. Over 53 to 63 (RTDIALHQPMY) the chain is Cytoplasmic. A helical transmembrane segment spans residues 64–84 (LFLAMLALAEVRVSASTLPTV). Residues 85–104 (LGIFLFGNTEISLEACLFPD) are Extracellular-facing. Cysteines 100 and 191 form a disulfide. A helical membrane pass occupies residues 105–125 (VLHPFFIHDGASCAAGHVFGP). Over 126-161 (LYSHLQPTELHSYPDTAQGLWHRSYYRTEKHYAHGS) the chain is Cytoplasmic. A helical transmembrane segment spans residues 162–182 (VAHSLMASALLWPQCPLTFLL). Topologically, residues 183 to 191 (SAPQSYLSC) are extracellular. The helical transmembrane segment at 192-212 (GNISVNNIYGIFIVTSTFGLD) threads the bilayer. Residues 213–242 (SLLIVISYGLILHTVLGIATGEGRKKALNT) lie on the Cytoplasmic side of the membrane. The chain crosses the membrane as a helical span at residues 243-263 (CGSHVCAVLAYYVPMIGLSIV). Topologically, residues 264–275 (HRLGHRVSPLLQ) are extracellular. A helical membrane pass occupies residues 276–296 (AMMANAYLFFPPVVNPIVYSI). The Cytoplasmic segment spans residues 297–316 (KTKEIHGAIVRMLLEKRRRV).

This sequence belongs to the G-protein coupled receptor 1 family.

It is found in the cell membrane. Functionally, odorant receptor. The protein is Olfactory receptor 51J1 (OR51J1) of Homo sapiens (Human).